The primary structure comprises 625 residues: MKQPTEQRFDYVKIGLASPDRIRQWGERTLPNGILVGEVTKPETINYRTLKPEMDGLFCERIFGPSKDWECWCGKYKRVRHRGIVCERCGVEVTESRVRRHRMGFIKLAAPVTHVWYLKGIPSYLSILLDMPLRDVEQIVYFNAYVVLDPGNSGNLQYKQLLTEDQWLEIEEQIYAEDSELYGIEVGIGAEAIERLLQELNLDEEAEKLREEIIESKGQKRAKLIKRLRVIDNFIATGSQPDWMVLTVIPVIPPDLRPMVQLDGGRFATSDLNDLYRRVINRNNRLSRLQEILAPEIIVRNEKRMLQEAVDALIDNGRRGRTVVGANNRPLKSLSDIIEGKQGRFRQNLLGKRVDYSGRSVIVVGPKLKIFQCGLPREMAIELFQPFVIHRLIKLGLVNNIKAAKKMIQRGDPQVWNVLEEVITGHPVLLNRAPTLHRLGIQAFEPILVEGRAIQLHPLVCPAFNADFDGDQMAVHVPLSLESQSEARLLMLACHNILSPATGRPIVAPSQDMVLGCYYLTSENPKAQKGAESYYSDLEDALMAYEQGLVDLHAYVWVRCDLEVVTEQPDDKPIKTETSEDGTVTKYYRHRKVRETADGKLICQFIHTTVGRIIYNKTVQDTLVA.

Positions 71, 73, 86, and 89 each coordinate Zn(2+). Mg(2+)-binding residues include Asp-467, Asp-469, and Asp-471.

This sequence belongs to the RNA polymerase beta' chain family. RpoC1 subfamily. As to quaternary structure, in cyanobacteria the RNAP catalytic core is composed of 2 alpha, 1 beta, 1 beta', 1 gamma and 1 omega subunit. When a sigma factor is associated with the core the holoenzyme is formed, which can initiate transcription. Mg(2+) is required as a cofactor. It depends on Zn(2+) as a cofactor.

It catalyses the reaction RNA(n) + a ribonucleoside 5'-triphosphate = RNA(n+1) + diphosphate. In terms of biological role, DNA-dependent RNA polymerase catalyzes the transcription of DNA into RNA using the four ribonucleoside triphosphates as substrates. This chain is DNA-directed RNA polymerase subunit gamma, found in Gloeothece citriformis (strain PCC 7424) (Cyanothece sp. (strain PCC 7424)).